We begin with the raw amino-acid sequence, 31 residues long: Kappa-theraphotoxin-Ps1b (31 aa).

Intrachain disulfides connect Cys2-Cys16, Cys9-Cys21, and Cys15-Cys25. Met31 carries the methionine amide modification.

This sequence belongs to the neurotoxin 30 (phrixotoxin) family. As to expression, expressed by the venom gland.

Its subcellular location is the secreted. Its function is as follows. Potent and specific blocker of Kv4.2/KCND2 (IC(50)=34 nM) and Kv4.3/KCND3 (IC(50)=71 nM) potassium channels. Acts by altering the gating properties of these channels. In Paraphysa scrofa (Chilean copper tarantula), this protein is Kappa-theraphotoxin-Ps1b.